Consider the following 269-residue polypeptide: 4-hydroxy-tetrahydrodipicolinate reductase (269 aa).

Residues 9 to 14 and Glu35 each bind NAD(+); that span reads GAGGRM. Arg36 serves as a coordination point for NADP(+). NAD(+) contacts are provided by residues 98-100 and 122-125; these read GTT and ASNY. The active-site Proton donor/acceptor is the His155. (S)-2,3,4,5-tetrahydrodipicolinate is bound at residue His156. Lys159 serves as the catalytic Proton donor. 165 to 166 is a binding site for (S)-2,3,4,5-tetrahydrodipicolinate; that stretch reads GT.

The protein belongs to the DapB family.

It localises to the cytoplasm. It carries out the reaction (S)-2,3,4,5-tetrahydrodipicolinate + NAD(+) + H2O = (2S,4S)-4-hydroxy-2,3,4,5-tetrahydrodipicolinate + NADH + H(+). The enzyme catalyses (S)-2,3,4,5-tetrahydrodipicolinate + NADP(+) + H2O = (2S,4S)-4-hydroxy-2,3,4,5-tetrahydrodipicolinate + NADPH + H(+). The protein operates within amino-acid biosynthesis; L-lysine biosynthesis via DAP pathway; (S)-tetrahydrodipicolinate from L-aspartate: step 4/4. Its function is as follows. Catalyzes the conversion of 4-hydroxy-tetrahydrodipicolinate (HTPA) to tetrahydrodipicolinate. In Actinobacillus pleuropneumoniae serotype 3 (strain JL03), this protein is 4-hydroxy-tetrahydrodipicolinate reductase.